The chain runs to 228 residues: MVMRNPSALLLEQFPWQETLQWQPTPQQQEQFQRFYGALLAANQGMNLTRITAVPDFWEKHLWDSLRGILPWLQPTGETLWGAKIQQVIDIGSGGGFPGVPVAIARPDWSVTLLEATQKKVKFLHSLGSAVGLANIYPEWGRAESHGRRYDLALIRAVGDVARCCAYGLPLLRSGGILVLYRGQWSDEDTQHLETLLPRYRSRRLDIQGFTTPLSHAQRHCVYLQRQG.

Residues Gly-92, Phe-97, Glu-115–Thr-117, Ala-143–Glu-144, and Arg-156 each bind S-adenosyl-L-methionine.

This sequence belongs to the methyltransferase superfamily. RNA methyltransferase RsmG family.

It localises to the cytoplasm. In terms of biological role, specifically methylates the N7 position of a guanine in 16S rRNA. This chain is Ribosomal RNA small subunit methyltransferase G, found in Thermosynechococcus vestitus (strain NIES-2133 / IAM M-273 / BP-1).